The sequence spans 77 residues: Large ribosomal subunit protein bL28 (77 aa).

The protein belongs to the bacterial ribosomal protein bL28 family.

The sequence is that of Large ribosomal subunit protein bL28 from Delftia acidovorans (strain DSM 14801 / SPH-1).